The sequence spans 467 residues: Matrix metalloproteinase-18 (467 aa).

A signal peptide spans 1–17 (MNSLLLKLLLCVAITAA). The propeptide occupies 18-99 (FPADKQDEPP…PRCGVYDVGQ (82 aa)). Positions 90 to 97 (PRCGVYDV) match the Cysteine switch motif. Zn(2+)-binding residues include cysteine 92 and histidine 218. Residue glutamate 219 is part of the active site. Positions 222 and 228 each coordinate Zn(2+). 4 Hemopexin repeats span residues 277 to 326 (PSRC…WPSL), 327 to 373 (PTNI…GFPK), 375 to 423 (VKRI…FPGI), and 424 to 467 (PDKI…WLGC). The cysteines at positions 280 and 467 are disulfide-linked.

It belongs to the peptidase M10A family. The cofactor is Zn(2+). Ca(2+) is required as a cofactor. Expressed only transiently in whole animal, at time when tadpole feeding begins.

It localises to the secreted. Its subcellular location is the extracellular space. It is found in the extracellular matrix. Up-regulated in the tail by thyroid hormone. Functionally, cleaves collagen type I. May play a role in larval tissue degeneration and adult organogenesis during amphibian metamorphosis. May be involved in tail resorption. In Xenopus laevis (African clawed frog), this protein is Matrix metalloproteinase-18 (mmp18).